An 805-amino-acid chain; its full sequence is Leucine--tRNA ligase (805 aa).

Residues 40–51 (PYPSGQGLHVGH) carry the 'HIGH' region motif. Positions 577–581 (KMSKS) match the 'KMSKS' region motif. An ATP-binding site is contributed by K580.

Belongs to the class-I aminoacyl-tRNA synthetase family.

It is found in the cytoplasm. The catalysed reaction is tRNA(Leu) + L-leucine + ATP = L-leucyl-tRNA(Leu) + AMP + diphosphate. The protein is Leucine--tRNA ligase of Pediococcus pentosaceus (strain ATCC 25745 / CCUG 21536 / LMG 10740 / 183-1w).